A 244-amino-acid polypeptide reads, in one-letter code: Small ribosomal subunit protein uS3 (244 aa).

The 69-residue stretch at 39-107 (VREMLRKKLA…PAHINVTEVR (69 aa)) folds into the KH type-2 domain. The segment at 213 to 244 (VGQEKQDDSPRNDRNDRGDRGDRPSRPAREAR) is disordered. Positions 216-244 (EKQDDSPRNDRNDRGDRGDRPSRPAREAR) are enriched in basic and acidic residues.

It belongs to the universal ribosomal protein uS3 family. In terms of assembly, part of the 30S ribosomal subunit. Forms a tight complex with proteins S10 and S14.

Its function is as follows. Binds the lower part of the 30S subunit head. Binds mRNA in the 70S ribosome, positioning it for translation. This is Small ribosomal subunit protein uS3 from Xanthomonas euvesicatoria pv. vesicatoria (strain 85-10) (Xanthomonas campestris pv. vesicatoria).